Reading from the N-terminus, the 452-residue chain is Probable phosphoglucosamine mutase (452 aa).

Ser-96 acts as the Phosphoserine intermediate in catalysis. Mg(2+) is bound by residues Ser-96, Asp-233, Asp-235, and Asp-237. At Ser-96 the chain carries Phosphoserine.

Belongs to the phosphohexose mutase family. The cofactor is Mg(2+). Activated by phosphorylation.

The catalysed reaction is alpha-D-glucosamine 1-phosphate = D-glucosamine 6-phosphate. Catalyzes the conversion of glucosamine-6-phosphate to glucosamine-1-phosphate. This is Probable phosphoglucosamine mutase from Pyrococcus furiosus (strain ATCC 43587 / DSM 3638 / JCM 8422 / Vc1).